The chain runs to 122 residues: Small ribosomal subunit protein uS12cz/uS12cy (122 aa).

The protein belongs to the universal ribosomal protein uS12 family. As to quaternary structure, part of the 30S ribosomal subunit.

The protein resides in the plastid. The protein localises to the chloroplast. In terms of biological role, with S4 and S5 plays an important role in translational accuracy. Located at the interface of the 30S and 50S subunits. The polypeptide is Small ribosomal subunit protein uS12cz/uS12cy (rps12-A) (Triticum aestivum (Wheat)).